The chain runs to 27 residues: Alpha-amylase/trypsin inhibitor CM17 (27 aa).

The protein belongs to the protease inhibitor I6 (cereal trypsin/alpha-amylase inhibitor) family. In terms of tissue distribution, developing endosperm.

It localises to the secreted. In terms of biological role, alpha-amylase/trypsin inhibitor. It could be involved in insect defense mechanisms. The protein is Alpha-amylase/trypsin inhibitor CM17 of Triticum aestivum (Wheat).